The primary structure comprises 455 residues: Kynureninase (455 aa).

Pyridoxal 5'-phosphate is bound by residues Leu-94, Thr-95, 122–125 (FPSD), Asp-208, His-211, and Tyr-233. N6-(pyridoxal phosphate)lysine is present on Lys-234. The pyridoxal 5'-phosphate site is built by Trp-275 and Asn-303.

Belongs to the kynureninase family. As to quaternary structure, homodimer. Requires pyridoxal 5'-phosphate as cofactor.

Its subcellular location is the cytoplasm. The enzyme catalyses L-kynurenine + H2O = anthranilate + L-alanine + H(+). The catalysed reaction is 3-hydroxy-L-kynurenine + H2O = 3-hydroxyanthranilate + L-alanine + H(+). It participates in amino-acid degradation; L-kynurenine degradation; L-alanine and anthranilate from L-kynurenine: step 1/1. The protein operates within cofactor biosynthesis; NAD(+) biosynthesis; quinolinate from L-kynurenine: step 2/3. Catalyzes the cleavage of L-kynurenine (L-Kyn) and L-3-hydroxykynurenine (L-3OHKyn) into anthranilic acid (AA) and 3-hydroxyanthranilic acid (3-OHAA), respectively. The sequence is that of Kynureninase from Vanderwaltozyma polyspora (strain ATCC 22028 / DSM 70294 / BCRC 21397 / CBS 2163 / NBRC 10782 / NRRL Y-8283 / UCD 57-17) (Kluyveromyces polysporus).